Here is a 234-residue protein sequence, read N- to C-terminus: OVARIAN TUMOR DOMAIN-containing deubiquitinating enzyme 3 (234 aa).

Residues 76–234 enclose the OTU domain; sequence YAVDRVKGDG…SGRNHYDLLR (159 aa). Residues 81-87 form a cys-loop region; it reads VKGDGRC. The active site involves Asp-84. The active-site Nucleophile is the Cys-87. Positions 154–164 are variable-loop; it reads IGRHDFWGGES. Positions 224–229 are his-loop; it reads YSGRNH. Residue His-229 is part of the active site.

It belongs to the peptidase C85 family.

It catalyses the reaction Thiol-dependent hydrolysis of ester, thioester, amide, peptide and isopeptide bonds formed by the C-terminal Gly of ubiquitin (a 76-residue protein attached to proteins as an intracellular targeting signal).. Functionally, hydrolase that can remove conjugated ubiquitin from proteins in vitro and may therefore play an important regulatory role at the level of protein turnover by preventing degradation. Cysteine protease with a preference for 'Lys-63' over 'Lys-48' over 'Met-1' -linked ubiquitin (UB) tetramers (e.g. Ub3 and Ub4) as substrates. Also cleaves RUB-GST fusion. The sequence is that of OVARIAN TUMOR DOMAIN-containing deubiquitinating enzyme 3 from Arabidopsis thaliana (Mouse-ear cress).